We begin with the raw amino-acid sequence, 208 residues long: Ectodysplasin-A receptor-associated adapter protein (208 aa).

Over residues 1–18 (MASPDDPLRSDHMAKEPV) the composition is skewed to basic and acidic residues. The tract at residues 1-99 (MASPDDPLRS…KGSCSCPSCS (99 aa)) is disordered. Over residues 49–61 (TVNSNCPPNSDDQ) the composition is skewed to polar residues. One can recognise a Death domain in the interval 116–195 (DTIRIKLDPC…KILRRWVDEE (80 aa)).

In terms of assembly, binds EDAR. Self-associates and binds TRAF1, TRAF2 and TRAF3.

It localises to the cytoplasm. In terms of biological role, adapter protein that interacts with EDAR DEATH domain and couples the receptor to EDA signaling pathway during morphogenesis of ectodermal organs. Mediates the activation of NF-kappa-B. In Mus musculus (Mouse), this protein is Ectodysplasin-A receptor-associated adapter protein (Edaradd).